We begin with the raw amino-acid sequence, 233 residues long: Purine nucleoside phosphorylase DeoD-type (233 aa).

Residue H4 coordinates a purine D-ribonucleoside. Residues G20, R24, R43, and 87-90 (RIGT) each bind phosphate. A purine D-ribonucleoside-binding positions include 179-181 (EME) and 203-204 (SD). D204 acts as the Proton donor in catalysis.

Belongs to the PNP/UDP phosphorylase family. In terms of assembly, homohexamer; trimer of homodimers.

The catalysed reaction is a purine D-ribonucleoside + phosphate = a purine nucleobase + alpha-D-ribose 1-phosphate. It catalyses the reaction a purine 2'-deoxy-D-ribonucleoside + phosphate = a purine nucleobase + 2-deoxy-alpha-D-ribose 1-phosphate. In terms of biological role, catalyzes the reversible phosphorolytic breakdown of the N-glycosidic bond in the beta-(deoxy)ribonucleoside molecules, with the formation of the corresponding free purine bases and pentose-1-phosphate. The protein is Purine nucleoside phosphorylase DeoD-type of Helicobacter pylori (strain G27).